Consider the following 134-residue polypeptide: Large ribosomal subunit protein eL32 (134 aa).

This sequence belongs to the eukaryotic ribosomal protein eL32 family.

The chain is Large ribosomal subunit protein eL32 (RpL32) from Apis mellifera (Honeybee).